The chain runs to 428 residues: Cell number regulator 13 (428 aa).

Positions 233-280 (PEKETNVKAPEKKGSNYSESKGETAKSFDDDDDYPKKQNGDYPKKQKD) are enriched in basic and acidic residues. Residues 233–290 (PEKETNVKAPEKKGSNYSESKGETAKSFDDDDDYPKKQNGDYPKKQKDTCSTQRCSSQ) are disordered. Positions 281-290 (TCSTQRCSSQ) are enriched in polar residues. A helical membrane pass occupies residues 354 to 370 (IMAYSLILSCCCYTCCV).

As to expression, expressed in roots, coleoptiles, leaves, stalks, apical meristems, immature ears, embryos, endosperm, pericarp, silks and tassel spikelets. Not detected in pollen.

The protein resides in the membrane. The protein is Cell number regulator 13 (CNR13) of Zea mays (Maize).